A 133-amino-acid polypeptide reads, in one-letter code: Small ribosomal subunit protein uS8 (133 aa).

This sequence belongs to the universal ribosomal protein uS8 family. As to quaternary structure, part of the 30S ribosomal subunit. Contacts proteins S5 and S12.

Its function is as follows. One of the primary rRNA binding proteins, it binds directly to 16S rRNA central domain where it helps coordinate assembly of the platform of the 30S subunit. This chain is Small ribosomal subunit protein uS8, found in Acaryochloris marina (strain MBIC 11017).